The primary structure comprises 255 residues: tRNA (guanine-N(1)-)-methyltransferase (255 aa).

S-adenosyl-L-methionine-binding positions include Gly-112 and 131 to 136 (LGDYVL).

This sequence belongs to the RNA methyltransferase TrmD family. Homodimer.

Its subcellular location is the cytoplasm. It catalyses the reaction guanosine(37) in tRNA + S-adenosyl-L-methionine = N(1)-methylguanosine(37) in tRNA + S-adenosyl-L-homocysteine + H(+). Functionally, specifically methylates guanosine-37 in various tRNAs. The polypeptide is tRNA (guanine-N(1)-)-methyltransferase (Lacticaseibacillus paracasei (strain ATCC 334 / BCRC 17002 / CCUG 31169 / CIP 107868 / KCTC 3260 / NRRL B-441) (Lactobacillus paracasei)).